We begin with the raw amino-acid sequence, 407 residues long: MMVTVVSNYCQLSQTQLSQTFAEKFTVTEELLQSLKKTALSGDEESIELLHNIALGYDEFGKKAEDILYHIVRNPTNDTLSIIKLIKNACLKLYNLAHTATKHPLKSHDSDNLLFKKLFSPSKLMAIIGEDIPLISEKQSLSKVLLNDKNNELSDGTNFWDKNRQLTTDEIACYLKKIAANAKNTQVNYPTDFYLPNSNSTYLEVALNDNIKSDPSWPKEVQLFPINTGGHWILVSLQKIVNEKNNTQQIKCIIFNSLRALGHEKENSLKRIINSFNSFNCDPTRETPNNKNITDHLTEPEIIFLHADLQQYLSQSCGAFVCMAAQEVIEQMESNSDSAPYTLLKNYADRFKKYSAEEQYEIDFQHRLENRNCYLDKYGDANINHYYRNLEIKNSHPKNRASSKRVS.

Residue His-231 is part of the active site. Residue Cys-317 is the Nucleophile of the active site.

Belongs to the peptidase C79 family.

In terms of biological role, protease that can act as an efficient and specific deubiquitinating enzyme in vitro. Does not possess desumoylating and deneddylating activities. The physiological substrate is unknown. The sequence is that of Protease ElaD (elaD) from Escherichia coli O157:H7.